We begin with the raw amino-acid sequence, 206 residues long: Small ribosomal subunit protein uS4 (206 aa).

The S4 RNA-binding domain maps to 96 to 156; the sequence is TRLDNVVYRM…EKSRTQARIK (61 aa).

It belongs to the universal ribosomal protein uS4 family. As to quaternary structure, part of the 30S ribosomal subunit. Contacts protein S5. The interaction surface between S4 and S5 is involved in control of translational fidelity.

Functionally, one of the primary rRNA binding proteins, it binds directly to 16S rRNA where it nucleates assembly of the body of the 30S subunit. With S5 and S12 plays an important role in translational accuracy. The polypeptide is Small ribosomal subunit protein uS4 (Shewanella baltica (strain OS223)).